The chain runs to 142 residues: Large ribosomal subunit protein uL11 (142 aa).

The protein belongs to the universal ribosomal protein uL11 family. As to quaternary structure, part of the ribosomal stalk of the 50S ribosomal subunit. Interacts with L10 and the large rRNA to form the base of the stalk. L10 forms an elongated spine to which L12 dimers bind in a sequential fashion forming a multimeric L10(L12)X complex. One or more lysine residues are methylated.

Its function is as follows. Forms part of the ribosomal stalk which helps the ribosome interact with GTP-bound translation factors. This Xylella fastidiosa (strain 9a5c) protein is Large ribosomal subunit protein uL11.